Here is a 537-residue protein sequence, read N- to C-terminus: uncharacterized protein (537 aa).

The next 6 membrane-spanning stretches (helical) occupy residues 5–25, 40–60, 63–83, 115–135, 149–169, and 197–217; these read IGLG…PWFV, LAVA…FFGW, VLWV…MAVV, GLYY…HLEG, VYLL…WVTL, and VGIV…ALVI.

The protein resides in the plastid. Its subcellular location is the chloroplast membrane. This is an uncharacterized protein from Ostreococcus tauri.